The sequence spans 218 residues: Adenylate kinase (218 aa).

10–15 contributes to the ATP binding site; that stretch reads GAGKGT. The segment at 30–59 is NMP; the sequence is STGDMLRAAVKAQSELGMAAKKVMDEGGLV. AMP-binding positions include Thr-31, Arg-36, 57–59, 85–88, and Gln-92; these read GLV and GFPR. An LID region spans residues 122 to 159; that stretch reads GRRVHPASGRTYHIVFNPPAVEGKDDVTGEDLVQRDDD. ATP-binding positions include Arg-123 and 132-133; that span reads TY. Arg-156 and Arg-167 together coordinate AMP. Residue Gly-203 participates in ATP binding.

This sequence belongs to the adenylate kinase family. As to quaternary structure, monomer.

Its subcellular location is the cytoplasm. The catalysed reaction is AMP + ATP = 2 ADP. It participates in purine metabolism; AMP biosynthesis via salvage pathway; AMP from ADP: step 1/1. Functionally, catalyzes the reversible transfer of the terminal phosphate group between ATP and AMP. Plays an important role in cellular energy homeostasis and in adenine nucleotide metabolism. This chain is Adenylate kinase, found in Chlorobaculum parvum (strain DSM 263 / NCIMB 8327) (Chlorobium vibrioforme subsp. thiosulfatophilum).